The following is a 342-amino-acid chain: Methylthioribose-1-phosphate isomerase (342 aa).

Substrate contacts are provided by residues 44 to 46 (RGA), R85, and Q192. D233 acts as the Proton donor in catalysis. 243–244 (NK) contributes to the substrate binding site.

This sequence belongs to the eIF-2B alpha/beta/delta subunits family. MtnA subfamily.

It catalyses the reaction 5-(methylsulfanyl)-alpha-D-ribose 1-phosphate = 5-(methylsulfanyl)-D-ribulose 1-phosphate. It participates in amino-acid biosynthesis; L-methionine biosynthesis via salvage pathway; L-methionine from S-methyl-5-thio-alpha-D-ribose 1-phosphate: step 1/6. Catalyzes the interconversion of methylthioribose-1-phosphate (MTR-1-P) into methylthioribulose-1-phosphate (MTRu-1-P). This is Methylthioribose-1-phosphate isomerase from Caldicellulosiruptor saccharolyticus (strain ATCC 43494 / DSM 8903 / Tp8T 6331).